Consider the following 477-residue polypeptide: Protein kinase C and casein kinase substrate in neurons protein 2 (477 aa).

The F-BAR domain maps to valine 11–aspartate 282. The stretch at lysine 25–isoleucine 274 forms a coiled coil. Basic and acidic residues-rich tracts occupy residues cysteine 163–serine 176 and glutamine 186–aspartate 216. Disordered regions lie at residues cysteine 163–threonine 218 and arginine 314–glutamate 412. Positions glycine 328–glutamine 341 are enriched in low complexity. A compositionally biased stretch (polar residues) spans histidine 342–proline 357. The NPF1 motif lies at asparagine 356–phenylalanine 358. Residues threonine 370–glutamate 388 show a composition bias toward basic and acidic residues. Over residues asparagine 395 to asparagine 407 the composition is skewed to polar residues. The NPF2 motif lies at asparagine 396–phenylalanine 398. The NPF3 motif lies at asparagine 408–phenylalanine 410. In terms of domain architecture, SH3 spans threonine 417 to glutamine 477.

It belongs to the PACSIN family. In terms of assembly, interacts with adam13 through the SH3 domains. Phosphorylated. As to expression, ubiquitously expressed with higher expression in the ectoderm, the neuroectoderm, and dorsal mesoderm layers.

The protein localises to the cytoplasm. It is found in the cytoskeleton. The protein resides in the cytoplasmic vesicle membrane. It localises to the cell projection. Its subcellular location is the ruffle membrane. The protein localises to the early endosome. It is found in the recycling endosome membrane. The protein resides in the cell membrane. It localises to the membrane. Its subcellular location is the caveola. The protein localises to the cell junction. It is found in the adherens junction. Its function is as follows. Regulates the morphogenesis and endocytosis of caveolae. Lipid-binding protein that is able to promote the tubulation of the phosphatidic acid-containing membranes it preferentially binds. Plays a role in intracellular vesicle-mediated transport. Involved in the endocytosis of cell-surface receptors like the EGF receptor, contributing to its internalization in the absence of EGF stimulus. The chain is Protein kinase C and casein kinase substrate in neurons protein 2 (pacsin2) from Xenopus laevis (African clawed frog).